The sequence spans 79 residues: MORN repeat-containing protein 2 (79 aa).

MORN repeat units lie at residues 15 to 37 (YEGHFKDNMFHGLGTYTFPNGAK) and 38 to 60 (YTGNFNENRVEGEGQYTDIQGLE).

The chain is MORN repeat-containing protein 2 (MORN2) from Bos taurus (Bovine).